We begin with the raw amino-acid sequence, 488 residues long: NAD-reducing hydrogenase HoxS subunit beta (488 aa).

Cys62, Cys65, Cys458, and Cys461 together coordinate Ni(2+).

Belongs to the [NiFe]/[NiFeSe] hydrogenase large subunit family. As to quaternary structure, tetramer of an alpha and a gamma subunits (flavin-containing dimer), and a delta and a nickel-containing beta subunits (hydrogenase dimer). FMN is required as a cofactor. Requires Ni(2+) as cofactor.

It localises to the cytoplasm. The enzyme catalyses H2 + NAD(+) = NADH + H(+). The protein is NAD-reducing hydrogenase HoxS subunit beta (hoxH) of Cupriavidus necator (strain ATCC 17699 / DSM 428 / KCTC 22496 / NCIMB 10442 / H16 / Stanier 337) (Ralstonia eutropha).